The primary structure comprises 342 residues: Phomopsin biosynthesis cluster protein B' (342 aa).

The tract at residues 1–22 (MESIAKAKSLPNKGRTYDSQRP) is disordered. A helical transmembrane segment spans residues 87 to 107 (VLIIGCAVISLFAIIGALGFA). The interval 118–186 (CASPAHQNPH…QCGESPDEAQ (69 aa)) is disordered. The span at 144–155 (HSGSHSSSSSTN) shows a compositional bias: low complexity. A glycan (N-linked (GlcNAc...) asparagine) is linked at asparagine 248.

It is found in the membrane. Its function is as follows. Part of the gene cluster that mediates the biosynthesis of the phomopsins, a group of hexapeptide mycotoxins which infects lupins and causes lupinosis disease in livestock. The role of phomB' within the phomopsins biosynthesis pathway has still to be determined. The pathway starts with the processing of the precursor phomA by several endopeptidases including kexin proteases as well as the cluster-specific S41 family peptidase phomP1 and the oligopeptidase phomG to produce 10 identical copies of the hexapeptide Tyr-Val-Ile-Pro-Ile-Asp. After being excised from the precursor peptide, the core peptides are cyclized and modified post-translationally by enzymes encoded within the gene cluster. The timing and order of proteolysis of the phomA precursor and PTMs are still unknown. Two tyrosinase-like enzymes, phomQ1 and phomQ2, catalyze the chlorination and hydroxylation of Tyr, respectively. PhomYb, is proposed to be involved in the construction of the macrocyclic structure. The other 4 ustYa family proteins may be involved in PTMs that generate the unique structure of phomopsin A. PhomYa is required for the hydroxylation of C-beta of Tyr. PhomYc, phomYd, and phomYe are responsible for the biosynthesis of 2,3-dehydroisoleucine (dIle), 2,3-dehydroaspartic acid (dAsp), and 3,4-dehydroproline (dPro), respectively. While dIle formation by phomYc is indispensable for the installation of dAsp by phomYd, the order of the other PTMs have not been elucidated yet. Most of the biosynthetic enzymes likely have broad substrate specificity, and thus, there might be a metabolic grid from a precursor to phomopsin A. The enzyme(s) responsible for the biosynthesis of 3,4-dehydrovaline (dVal) have also not been identified yet. Finally, phomM acts as an S-adenosylmethionine-dependent alpha-N-methyltransferase that catalyzes two successive N-methylation reactions, converting N-desmethyl-phomopsin A to phomopsin A and phomopsin A further to an N,N-dimethylated congener called phomopsin E. The polypeptide is Phomopsin biosynthesis cluster protein B' (Diaporthe leptostromiformis (Lupinosis disease fungus)).